The following is a 244-amino-acid chain: Ribonuclease PH (244 aa).

Phosphate is bound by residues Arg-86 and 124-126 (GTR).

The protein belongs to the RNase PH family. Homohexameric ring arranged as a trimer of dimers.

It catalyses the reaction tRNA(n+1) + phosphate = tRNA(n) + a ribonucleoside 5'-diphosphate. Functionally, phosphorolytic 3'-5' exoribonuclease that plays an important role in tRNA 3'-end maturation. Removes nucleotide residues following the 3'-CCA terminus of tRNAs; can also add nucleotides to the ends of RNA molecules by using nucleoside diphosphates as substrates, but this may not be physiologically important. Probably plays a role in initiation of 16S rRNA degradation (leading to ribosome degradation) during starvation. The protein is Ribonuclease PH of Glaesserella parasuis serovar 5 (strain SH0165) (Haemophilus parasuis).